The following is a 498-amino-acid chain: MRTNPTTSSSVVSTLEEKNLGRIAQIIGPVLDVVFPPGKMPNIYNALVVEGRDTVGQQINVTCEVQQLLGNNRVRAVAMSATDGLMRGMEVIDTGAPLSVPVGGATLGRIFNVLGEPVDNLGPVDTRTTSPIHRSAPAFIQLDTKLSIFETGIKVVDLLAPYRRGGKIGLFGGAGVGKTVLIMELINNIAKAHGGVSVFGGVGERTREGNDLYMEMKESGVINEKNIAESKVALVYGQMNEPPGARMRVGLTALTMAEYFRDVNEQDVLLFIDNIFRFVQAGSEVSALLGRMPSAVGYQPTLSTEMGSLQERITSTKEGSITSIQAVYVPADDLTDPAPATTFAHLDATTVLSRVLAAKGIYPAVDPLDSTSTMLQPRIVGEEHYETAQRVKQTSQRYKELQDIIAILGLDELSEEDRLTVARARKIERFLSQPFFVAEVFTGSPGKYVGLAETIRGFQLILSGELDGLPEQAFYLVGNIDEATAKAMNLEVESKLKK.

172–179 contacts ATP; that stretch reads GGAGVGKT.

The protein belongs to the ATPase alpha/beta chains family. F-type ATPases have 2 components, CF(1) - the catalytic core - and CF(0) - the membrane proton channel. CF(1) has five subunits: alpha(3), beta(3), gamma(1), delta(1), epsilon(1). CF(0) has four main subunits: a(1), b(1), b'(1) and c(9-12).

The protein localises to the plastid. It is found in the chloroplast thylakoid membrane. It catalyses the reaction ATP + H2O + 4 H(+)(in) = ADP + phosphate + 5 H(+)(out). Functionally, produces ATP from ADP in the presence of a proton gradient across the membrane. The catalytic sites are hosted primarily by the beta subunits. The protein is ATP synthase subunit beta, chloroplastic of Calamus usitatus (Palm tree).